A 577-amino-acid chain; its full sequence is MNIAAVFNALLVSVLATVLWKYIKLREHAFMVEEELVLMRQSQELSQVQIDYHAALQTLLEDGTRMVCTGRMHTDRICRFESLCYSTEAEEFIYFHSNSSVMLPNLGSRRFQPALLDLSSVEDHNTQYFNFVELPAAALKFMPKPVFVPDVALIANRFNPDNLMHVFHDDLLPIYYTMQQFTDLDPETRLFFMEGWSEGVHFDLYKLLSNKQPLLREQLKTLGRLLCFTKSYVGLSKITTWYQYGFVQPQGPKANILVSGNEIRQFTKFMMQKLNVSLEESSSEEYIVVFSRTINRLILNEAELILALAQEFQMKTITVSLEEHSFSDIVRLISNASMLVSMHGAQLVMSLFLPRGATVVELFPYAINPEHYTPYKTLATLPGMDLQYIAWQNTAREDTVTYPDRPWDQGGIAHLDKAEQERIIKSTEVPRHLCCRNPEWLFRAYQDTKVDIPSLIHVIRQTVKSKPGPKKKWSGSLYPGKVRDARCQASVQGTSEARLSVSWQVPWNLKYLKVREVKYEVWIQEQGENTYMPYILSHQNHTFSENIKPFTIYLVWIRCIFNKNLLGPFADVLLCST.

The Cytoplasmic portion of the chain corresponds to 1–4 (MNIA). The chain crosses the membrane as a helical; Signal-anchor for type II membrane protein span at residues 5-25 (AVFNALLVSVLATVLWKYIKL). Over 26–577 (REHAFMVEEE…PFADVLLCST (552 aa)) the chain is Lumenal. Residues N98, N275, N335, and N540 are each glycosylated (N-linked (GlcNAc...) asparagine). The Fibronectin type-III domain maps to 481–577 (KVRDARCQAS…PFADVLLCST (97 aa)).

Belongs to the glycosyltransferase 61 family.

The protein resides in the endoplasmic reticulum membrane. It carries out the reaction 3-O-(alpha-D-mannosyl)-L-threonyl-[protein] + UDP-N-acetyl-alpha-D-glucosamine = 3-O-(N-acetyl-beta-D-glucosaminyl-(1-&gt;4)-alpha-D-mannosyl)-L-threonyl-[protein] + UDP + H(+). It participates in protein modification; protein glycosylation. Its function is as follows. O-linked mannose beta-1,4-N-acetylglucosaminyltransferase that transfers UDP-N-acetyl-D-glucosamine to the 4-position of the mannose to generate N-acetyl-D-glucosamine-beta-1,4-O-D-mannosylprotein. Involved in the biosynthesis of the phosphorylated O-mannosyl trisaccharide (N-acetylgalactosamine-beta-3-N-acetylglucosamine-beta-4-(phosphate-6-)mannose), a carbohydrate structure present in alpha-dystroglycan (DAG1), which is required for binding laminin G-like domain-containing extracellular proteins with high affinity. This chain is Protein O-linked-mannose beta-1,4-N-acetylglucosaminyltransferase 2 (POMGNT2), found in Gallus gallus (Chicken).